The chain runs to 115 residues: Small polypeptide DEVIL 13 (115 aa).

Residues 1–12 show a composition bias toward basic and acidic residues; sequence MEEKWKLSKKDT. The segment at 1 to 89 is disordered; sequence MEEKWKLSKK…SITQKYSSLA (89 aa). Positions 13-65 are enriched in low complexity; sequence TASSSSSKSKFSRSFSTSASSTKSPIFVRSSSTKCSVPSSSSSSSSSSSISRS. Residues 44–63 form a helical membrane-spanning segment; it reads STKCSVPSSSSSSSSSSSIS. Residues 80-111 form a required for DVL/RTFL small polypeptide activity region; it reads SITQKYSSLAKEQKARFYIMRRCVAMLVCWHK.

The protein belongs to the DVL/RTFL small polypeptides family.

The protein resides in the cell membrane. Small polypeptide acting as a regulatory molecule which coordinates cellular responses required for differentiation, growth and development, probably by restricting polar cell proliferation in lateral organs and coordinating socket cell recruitment and differentiation at trichome sites. In Arabidopsis thaliana (Mouse-ear cress), this protein is Small polypeptide DEVIL 13.